We begin with the raw amino-acid sequence, 249 residues long: Dof zinc finger protein DOF4.5 (249 aa).

Residues R25–A79 form a Dof-type zinc finger. 4 residues coordinate Zn(2+): C27, C30, C52, and C55.

It is found in the nucleus. Functionally, transcription factor that binds specifically to a 5'-AA[AG]G-3' consensus core sequence. This is Dof zinc finger protein DOF4.5 (DOF4.5) from Arabidopsis thaliana (Mouse-ear cress).